Consider the following 519-residue polypeptide: ATP synthase subunit alpha, mitochondrial (519 aa).

188–195 is a binding site for ATP; it reads GDRQTGKS.

It belongs to the ATPase alpha/beta chains family. F-type ATPases have 2 components, CF(1) - the catalytic core - and CF(0) - the membrane proton channel. CF(1) has five subunits: alpha(3), beta(3), gamma(1), delta(1), epsilon(1). CF(0) has three main subunits: a, b and c.

The protein resides in the mitochondrion. It localises to the mitochondrion inner membrane. Mitochondrial membrane ATP synthase (F(1)F(0) ATP synthase or Complex V) produces ATP from ADP in the presence of a proton gradient across the membrane which is generated by electron transport complexes of the respiratory chain. F-type ATPases consist of two structural domains, F(1) - containing the extramembraneous catalytic core, and F(0) - containing the membrane proton channel, linked together by a central stalk and a peripheral stalk. During catalysis, ATP synthesis in the catalytic domain of F(1) is coupled via a rotary mechanism of the central stalk subunits to proton translocation. Subunits alpha and beta form the catalytic core in F(1). Rotation of the central stalk against the surrounding alpha(3)beta(3) subunits leads to hydrolysis of ATP in three separate catalytic sites on the beta subunits. Subunit alpha does not bear the catalytic high-affinity ATP-binding sites. This chain is ATP synthase subunit alpha, mitochondrial (atp1), found in Dictyostelium citrinum (Slime mold).